The following is a 334-amino-acid chain: D-alanine--D-alanine ligase (334 aa).

The region spanning 111 to 315 (KRVCLSHGVP…YEDLCIEILR (205 aa)) is the ATP-grasp domain. Position 141–196 (141–196 (AAEFGLPLMLKAPHEGSTIGIAKVETAEGMQAGFDLCAKYEAVVLVEQFVKGRELT)) interacts with ATP. 3 residues coordinate Mg(2+): aspartate 268, glutamate 282, and asparagine 284.

This sequence belongs to the D-alanine--D-alanine ligase family. The cofactor is Mg(2+). Mn(2+) is required as a cofactor.

It is found in the cytoplasm. It carries out the reaction 2 D-alanine + ATP = D-alanyl-D-alanine + ADP + phosphate + H(+). It functions in the pathway cell wall biogenesis; peptidoglycan biosynthesis. Functionally, cell wall formation. The chain is D-alanine--D-alanine ligase from Herminiimonas arsenicoxydans.